Consider the following 284-residue polypeptide: 3-methyl-2-oxobutanoate hydroxymethyltransferase (284 aa).

Mg(2+)-binding residues include aspartate 44 and aspartate 83. 3-methyl-2-oxobutanoate-binding positions include 44 to 45 (DS), aspartate 83, and lysine 112. Glutamate 114 is a Mg(2+) binding site. Glutamate 181 serves as the catalytic Proton acceptor.

This sequence belongs to the PanB family. In terms of assembly, homodecamer; pentamer of dimers. It depends on Mg(2+) as a cofactor.

The protein localises to the cytoplasm. The enzyme catalyses 3-methyl-2-oxobutanoate + (6R)-5,10-methylene-5,6,7,8-tetrahydrofolate + H2O = 2-dehydropantoate + (6S)-5,6,7,8-tetrahydrofolate. The protein operates within cofactor biosynthesis; coenzyme A biosynthesis. With respect to regulation, neither activated nor inhibited by coenzyme A. Functionally, catalyzes the reversible reaction in which hydroxymethyl group from 5,10-methylenetetrahydrofolate is transferred onto alpha-ketoisovalerate to form ketopantoate. This Thermococcus kodakarensis (strain ATCC BAA-918 / JCM 12380 / KOD1) (Pyrococcus kodakaraensis (strain KOD1)) protein is 3-methyl-2-oxobutanoate hydroxymethyltransferase.